The primary structure comprises 109 residues: Peptide chaperone MftB (109 aa).

Belongs to the peptide chaperone MftB family. Interacts with MftA and MftC.

Its function is as follows. Peptide chaperone involved in the biosynthesis of the enzyme cofactor mycofactocin (MFT). Binds MftA and MftC with high affinity, and is essential for MftC activity on MftA, likely via the formation of a ternary complex. This chain is Peptide chaperone MftB, found in Mycobacterium ulcerans (strain Agy99).